The chain runs to 302 residues: Recombination-associated protein RdgC (302 aa).

It belongs to the RdgC family.

It localises to the cytoplasm. The protein localises to the nucleoid. In terms of biological role, may be involved in recombination. The sequence is that of Recombination-associated protein RdgC from Actinobacillus pleuropneumoniae serotype 5b (strain L20).